The sequence spans 168 residues: uncharacterized protein (168 aa).

3 disordered regions span residues 37-74 (GGSK…SQFT), 81-100 (QYNY…PNYY), and 117-168 (MQPF…EETN). Composition is skewed to polar residues over residues 52–74 (HSGQ…SQFT) and 82–95 (YNYN…TRSV). Residues 120 to 129 (FNNQSFNNQS) show a composition bias toward low complexity. Residues 130–158 (RTHQSKTYQHNQQKRSFNGPRNNGPQNNV) are compositionally biased toward polar residues.

This is an uncharacterized protein from Acanthamoeba polyphaga (Amoeba).